Here is a 347-residue protein sequence, read N- to C-terminus: GPN-loop GTPase 2 (347 aa).

12-17 (GSGKST) serves as a coordination point for GTP. Positions 69–71 (GPN) match the Gly-Pro-Asn (GPN)-loop; involved in dimer interface motif. 175–178 (SKID) serves as a coordination point for GTP.

The protein belongs to the GPN-loop GTPase family. As to quaternary structure, heterodimers with NPA3/GPN1 or GPN3. Binds to RNA polymerase II (RNAPII).

The protein localises to the cytoplasm. In terms of biological role, small GTPase required for proper localization of RNA polymerase II and III (RNAPII and RNAPIII). May act at an RNAP assembly step prior to nuclear import. Required for establishment of sister chromatid cohesion. The protein is GPN-loop GTPase 2 of Saccharomyces cerevisiae (strain ATCC 204508 / S288c) (Baker's yeast).